Here is a 310-residue protein sequence, read N- to C-terminus: MAVVTMRELLESGVHFGHQTRRWNPKMKRFIFTERNGIYIIDLLQSLSYIDRAYEFVKETVAHGGTVMFVGTKKQAQEAIAEQATRVGMPYVNQRWLGGMLTNFSTVYKRLQRLKELEQIDFEDVAASGLTKKELLVLSREKAKLEKTLGGIREMSKVPSAVWIVDTKKEHIAVGEARKLNIPVVAILDTNCDPDEVDHKIPGNDDAIRSVTLLTRVIADAVAEGLIARSGAAGGAKGDKAAGEPLAAWERDLLEGEKAEKKDDAEAAEKPAEAPAAEAPAAEAAEAPAAEAAPAEEPAAEAPAADAEQA.

Residues 249 to 272 show a composition bias toward basic and acidic residues; it reads WERDLLEGEKAEKKDDAEAAEKPA. Residues 249 to 310 are disordered; sequence WERDLLEGEK…EAPAADAEQA (62 aa). A compositionally biased stretch (low complexity) spans 273–310; it reads EAPAAEAPAAEAAEAPAAEAAPAEEPAAEAPAADAEQA.

This sequence belongs to the universal ribosomal protein uS2 family.

This is Small ribosomal subunit protein uS2 (rpsB) from Streptomyces coelicolor (strain ATCC BAA-471 / A3(2) / M145).